The sequence spans 212 residues: Putative 3-methyladenine DNA glycosylase (212 aa).

This sequence belongs to the DNA glycosylase MPG family.

The sequence is that of Putative 3-methyladenine DNA glycosylase from Nocardia farcinica (strain IFM 10152).